We begin with the raw amino-acid sequence, 99 residues long: MALTKAEMSEYLFDKLGLSKRDAKELVELFFEEIRRALENGEQVKLSGFGNFDLRDKNQRPGRNPKTGEDIPITARRVVTFRPGQKLKSRVENASPKEN.

Positions 49-70 (FGNFDLRDKNQRPGRNPKTGED) are disordered.

Belongs to the bacterial histone-like protein family. As to quaternary structure, heterodimer of an alpha and a beta chain.

In terms of biological role, this protein is one of the two subunits of integration host factor, a specific DNA-binding protein that functions in genetic recombination as well as in transcriptional and translational control. This chain is Integration host factor subunit alpha, found in Cronobacter sakazakii (strain ATCC BAA-894) (Enterobacter sakazakii).